We begin with the raw amino-acid sequence, 121 residues long: Fluoride-specific ion channel FluC (121 aa).

4 helical membrane passes run 5-25 (LLIFLGGGTGSVLRYLLTISI), 33-53 (FPWGTFAVNILGCILIGVFYT), 66-83 (LMLTIGLCGGFTTFSTFS), and 98-118 (FFTYIIGSVVLGILGVMLGIW). 2 residues coordinate Na(+): glycine 74 and threonine 77.

This sequence belongs to the fluoride channel Fluc/FEX (TC 1.A.43) family.

It is found in the cell inner membrane. It catalyses the reaction fluoride(in) = fluoride(out). Na(+) is not transported, but it plays an essential structural role and its presence is essential for fluoride channel function. Functionally, fluoride-specific ion channel. Important for reducing fluoride concentration in the cell, thus reducing its toxicity. This chain is Fluoride-specific ion channel FluC, found in Phocaeicola vulgatus (strain ATCC 8482 / DSM 1447 / JCM 5826 / CCUG 4940 / NBRC 14291 / NCTC 11154) (Bacteroides vulgatus).